A 412-amino-acid chain; its full sequence is Na(+)-translocating NADH-quinone reductase subunit B (412 aa).

The next 3 helical transmembrane spans lie at 57–77, 127–147, and 163–183; these read MILV…NVGL, VFFL…EVLF, and SILF…ALGI. T236 bears the FMN phosphoryl threonine mark. 5 consecutive transmembrane segments (helical) span residues 270 to 290, 297 to 317, 322 to 342, 358 to 378, and 381 to 401; these read GSIG…ILFG, IVAG…VIGS, MFAM…GMMF, WSYG…NPAY, and GMML…YLVV.

It belongs to the NqrB/RnfD family. In terms of assembly, composed of six subunits; NqrA, NqrB, NqrC, NqrD, NqrE and NqrF. FMN is required as a cofactor.

It localises to the cell inner membrane. It catalyses the reaction a ubiquinone + n Na(+)(in) + NADH + H(+) = a ubiquinol + n Na(+)(out) + NAD(+). In terms of biological role, NQR complex catalyzes the reduction of ubiquinone-1 to ubiquinol by two successive reactions, coupled with the transport of Na(+) ions from the cytoplasm to the periplasm. NqrA to NqrE are probably involved in the second step, the conversion of ubisemiquinone to ubiquinol. In Klebsiella pneumoniae subsp. pneumoniae (strain ATCC 700721 / MGH 78578), this protein is Na(+)-translocating NADH-quinone reductase subunit B.